Consider the following 49-residue polypeptide: Large ribosomal subunit protein bL33B (49 aa).

Belongs to the bacterial ribosomal protein bL33 family.

This is Large ribosomal subunit protein bL33B from Bacillus cereus (strain ATCC 14579 / DSM 31 / CCUG 7414 / JCM 2152 / NBRC 15305 / NCIMB 9373 / NCTC 2599 / NRRL B-3711).